A 1476-amino-acid polypeptide reads, in one-letter code: ABC transporter G family member 17 (1476 aa).

2 disordered regions span residues serine 13 to aspartate 45 and phenylalanine 68 to asparagine 91. Residues glutamate 14–lysine 67 are a coiled coil. The span at asparagine 15–aspartate 39 shows a compositional bias: low complexity. Residues leucine 151–proline 402 enclose the ABC transporter 1 domain. The ABC transmembrane type-2 1 domain maps to tryptophan 507–leucine 751. Helical transmembrane passes span phenylalanine 517–threonine 537, alanine 547–leucine 567, isoleucine 592–phenylalanine 612, phenylalanine 623–glycine 643, and leucine 764–valine 784. An ABC transporter 2 domain is found at phenylalanine 838–valine 1082. Glycine 874–threonine 881 contacts ATP. 6 helical membrane-spanning segments follow: residues phenylalanine 1182–phenylalanine 1202, serine 1219–isoleucine 1239, leucine 1260–alanine 1280, tryptophan 1298–alanine 1318, isoleucine 1322–valine 1342, and phenylalanine 1450–leucine 1470. The 224-residue stretch at phenylalanine 1182–phenylalanine 1405 folds into the ABC transmembrane type-2 2 domain.

The protein belongs to the ABC transporter superfamily. ABCG family. PDR (TC 3.A.1.205) subfamily.

It is found in the membrane. This chain is ABC transporter G family member 17 (abcG17-1), found in Dictyostelium discoideum (Social amoeba).